Reading from the N-terminus, the 256-residue chain is MKTYKGYLIDLDGTMYNGTEKIEEACEFVRTLKDRGVPYLFVTNNSSRTPKQVADKLVSFDIPATEEQVFTTSMATAQHIAQQKKDASVYVIGEEGIRQAIEENGLTFGGENADFVVVGIDRSITYEKFAVGCLAIRNGARFISTNGDIAIPTERGLLPGNGSLTSVLTVSTGVQPVFIGKPESIIMEQAMRVLGTDVSETLMVGDNYATDIMAGINAGMDTLLVHTGVTKREHMTDDMEKPTHAIDSLTEWIPYI.

This sequence belongs to the HAD-like hydrolase superfamily. NagD family. As to quaternary structure, homodimer. Requires Mg(2+) as cofactor.

It localises to the cytoplasm. The catalysed reaction is a ribonucleoside 5'-phosphate + H2O = a ribonucleoside + phosphate. It catalyses the reaction XMP + H2O = xanthosine + phosphate. Functionally, catalyzes the hydrolysis of various purine and pyrimidine 5'-nucleotides, showing preference for 5'-nucleoside monophosphates and exhibiting the highest catalytic activity toward 5'-XMP. Also shows a relatively high phosphohydrolase activity toward the nucleotide precursors ribose-5-phosphate (R5P) and 5-phosphoribosyl-1-pyrophosphate (PRPP), and toward the non-natural substrate p-nitrophenyl phosphate (pNPP). This is 5'-nucleotidase YutF (yutF) from Bacillus subtilis (strain 168).